Reading from the N-terminus, the 442-residue chain is Tubulin beta chain (442 aa).

GTP-binding residues include Q11, E67, S136, G140, T141, G142, and N202. E67 is a binding site for Mg(2+).

This sequence belongs to the tubulin family. Dimer of alpha and beta chains. A typical microtubule is a hollow water-filled tube with an outer diameter of 25 nm and an inner diameter of 15 nM. Alpha-beta heterodimers associate head-to-tail to form protofilaments running lengthwise along the microtubule wall with the beta-tubulin subunit facing the microtubule plus end conferring a structural polarity. Microtubules usually have 13 protofilaments but different protofilament numbers can be found in some organisms and specialized cells. The cofactor is Mg(2+).

Its subcellular location is the cytoplasm. It localises to the cytoskeleton. In terms of biological role, tubulin is the major constituent of microtubules, a cylinder consisting of laterally associated linear protofilaments composed of alpha- and beta-tubulin heterodimers. Microtubules grow by the addition of GTP-tubulin dimers to the microtubule end, where a stabilizing cap forms. Below the cap, tubulin dimers are in GDP-bound state, owing to GTPase activity of alpha-tubulin. The sequence is that of Tubulin beta chain (TUBB) from Euglena gracilis.